A 325-amino-acid polypeptide reads, in one-letter code: Reaction center protein M chain (325 aa).

3 helical membrane passes run 54-80 (LGPL…LASV), 111-140 (NDGG…RARA), and 143-168 (MGTH…RPVL). (7R,8Z)-bacteriochlorophyll b is bound by residues H183 and H203. Residues 198 to 226 (FYNPFHALSIAFLYGATLLFAMHGATILA) traverse the membrane as a helical segment. Positions 220 and 235 each coordinate Fe cation. W253 serves as a coordination point for a ubiquinone. A helical membrane pass occupies residues 260 to 286 (NATTESIHRWAWWFAVLCPLCGGIGIL). H267 is a Fe cation binding site.

This sequence belongs to the reaction center PufL/M/PsbA/D family. Reaction center is composed of four bacteriochlorophylls, two bacteriopheophytins, two ubiquinones, one iron, and three highly hydrophobic polypeptide chains (designated L, M, and H).

The protein resides in the cell inner membrane. The reaction center is a membrane-bound complex that mediates the initial photochemical event in the electron transfer process of photosynthesis. This is Reaction center protein M chain (pufM) from Rubrivivax gelatinosus (strain NBRC 100245 / IL144).